Here is a 944-residue protein sequence, read N- to C-terminus: E3 ubiquitin-protein ligase JMJ24 (944 aa).

Disordered stretches follow at residues 20 to 40 (QTRSANGIGNGNGESIPGIPD) and 77 to 103 (ANSAFRANQKKAKRRSSLGETDTYSEG). In terms of domain architecture, WRC spans 38–83 (IPDDLRCKRSDGKQWRCTAMSMADKTVCEKHYIQAKKRAANSAFRA). The Nuclear localization signal 1 signature appears at 73–80 (KKRAANSA). The PHD-type; atypical zinc-finger motif lies at 217–269 (GEICHQCQRKDRERIISCLKCNQRAFCHNCLSARYSEISLEEVEKVCPACRGL). Zn(2+)-binding residues include Cys220, Cys223, Cys234, Cys237, Cys243, Cys246, Cys263, and Cys266. Residues 323-330 (EKRLREVE) carry the Nuclear localization signal 2 motif. The region spanning 621–873 (PRLGLLNVAA…ESARLAEEIR (253 aa)) is the JmjC domain. The span at 685-703 (ERVRKTKPVPEEPDQKMSE) shows a compositional bias: basic and acidic residues. The disordered stretch occupies residues 685–715 (ERVRKTKPVPEEPDQKMSENESLLSPEQKLR).

Belongs to the JARID1 histone demethylase family. As to quaternary structure, homodimer. Interacts with RDR2. Binds to CMT3. Associates with the E2 ubiquitin-conjugating enzyme UBC10. In terms of processing, self-ubiquitinates. In terms of tissue distribution, expressed in inflorescences, flowers, roots, siliques, leaves and stems, especially in the vasculature (mainly phloem), with highest levels in floral organs.

It is found in the nucleus. The enzyme catalyses S-ubiquitinyl-[E2 ubiquitin-conjugating enzyme]-L-cysteine + [acceptor protein]-L-lysine = [E2 ubiquitin-conjugating enzyme]-L-cysteine + N(6)-ubiquitinyl-[acceptor protein]-L-lysine.. Its function is as follows. Binds histone H3 but seems to have lost demethylase activity probably due to its inability to bind iron Fe(2+). Possesses E3 ubiquitin ligase activity and targets directly CMT3 for proteasomal degradation to initiate destabilization of the heterochromatic state (e.g. CHG cytosine methylation and H3K9me2) of endogenous silenced loci. Required for the removal of repressive H3K9me2 histone marks to facilitate the transcription of AtSN1, AtMu1c, solo LTR and SDC, thus counteracting their transcriptional silencing. Mainly required to promote the basal level transcription of silenced loci such as TE and repeats targeted by RNA-dependent DNA methylation (RdDM) for silencing, a specialized branch of the RNA interference (RNAi) pathway. Also cooperates with RNAi pathways for gene silencing both by contributing to the production of 24-nt siRNA to initiate RdDM and by recruiting RDR2 to enable local transcripts to make dsRNA. Antagonizes histone H3K9 demethylase IBM1/JMJ25 function. In Arabidopsis thaliana (Mouse-ear cress), this protein is E3 ubiquitin-protein ligase JMJ24.